A 977-amino-acid chain; its full sequence is Protein bicaudal C homolog 1 (977 aa).

The tract at residues 1–43 (MASQSEPGYLAAAQSDPGSNSERSTDSPVAGSEDDLVAAAPLL) is disordered. A phosphoserine mark is found at Ser-27, Ser-32, and Ser-45. KH domains are found at residues 134–201 (RVTL…RARI) and 286–350 (PVST…RQYL). Lys-400 carries the N6-acetyllysine modification. The span at 590–621 (SLGEKVLSSNHGDPSMQTAGPEQASPKSNSVE) shows a compositional bias: polar residues. Disordered regions lie at residues 590-622 (SLGE…SVEG), 667-702 (GTKN…GSER), and 794-848 (EGSS…KSRE). A phosphoserine mark is found at Ser-614 and Ser-681. Positions 692–702 (LADKKAPGSER) are enriched in basic and acidic residues. The span at 794-803 (EGSSLSLSRS) shows a compositional bias: low complexity. Residues 875–938 (FKGSDLPELF…LLAISELSKN (64 aa)) form the SAM domain.

The protein belongs to the BicC family. In terms of assembly, interacts (via KH domains) with ANKS6 (via SAM domain) in an RNA-dependent manner. Interacts with ANKS3. In the adult, predominantly expressed in heart and kidney. In 8 week old mice, expressed in growing primary oocytes and in the stromal cells of the theca.

It localises to the cytoplasm. Functionally, putative RNA-binding protein. May be involved in regulating gene expression during embryonic development. The sequence is that of Protein bicaudal C homolog 1 (Bicc1) from Mus musculus (Mouse).